The following is a 286-amino-acid chain: ATP synthase gamma chain (286 aa).

This sequence belongs to the ATPase gamma chain family. As to quaternary structure, F-type ATPases have 2 components, CF(1) - the catalytic core - and CF(0) - the membrane proton channel. CF(1) has five subunits: alpha(3), beta(3), gamma(1), delta(1), epsilon(1). CF(0) has three main subunits: a, b and c.

It localises to the cell inner membrane. Functionally, produces ATP from ADP in the presence of a proton gradient across the membrane. The gamma chain is believed to be important in regulating ATPase activity and the flow of protons through the CF(0) complex. The sequence is that of ATP synthase gamma chain from Pseudomonas entomophila (strain L48).